The following is a 259-amino-acid chain: Global transcriptional regulator CodY (259 aa).

The segment at 1–155 is GAF domain; sequence MSLLSRMRKI…GATVVGMEIL (155 aa). The segment at residues 203–222 is a DNA-binding region (H-T-H motif); the sequence is ASKIADRVGITRSVIVNALR. Residue Ser-215 is modified to Phosphoserine.

Belongs to the CodY family.

The protein localises to the cytoplasm. Its function is as follows. DNA-binding global transcriptional regulator which is involved in the adaptive response to starvation and acts by directly or indirectly controlling the expression of numerous genes in response to nutrient availability. During rapid exponential growth, CodY is highly active and represses genes whose products allow adaptation to nutrient depletion. In Halalkalibacterium halodurans (strain ATCC BAA-125 / DSM 18197 / FERM 7344 / JCM 9153 / C-125) (Bacillus halodurans), this protein is Global transcriptional regulator CodY.